The sequence spans 61 residues: Large ribosomal subunit protein bL32 (61 aa).

A compositionally biased stretch (basic residues) spans 1–16 (MAVPKKKTSKSRKNMR). A disordered region spans residues 1 to 20 (MAVPKKKTSKSRKNMRRAHD).

It belongs to the bacterial ribosomal protein bL32 family.

The chain is Large ribosomal subunit protein bL32 from Pelobacter propionicus (strain DSM 2379 / NBRC 103807 / OttBd1).